The sequence spans 563 residues: Zinc finger CCHC domain-containing protein 7 (563 aa).

Disordered regions lie at residues 41 to 64 and 133 to 157; these read SQNL…VPGA and SHST…QNSS. The span at 133–142 shows a compositional bias: polar residues; it reads SHSTPKVSAP. Low complexity predominate over residues 143–157; it reads QSNNFKSQKSCQNSS. CCHC-type zinc fingers lie at residues 265–282, 287–304, 305–322, 328–345, and 372–389; these read VVCR…NCPV, PACC…SCPS, RYCL…ECIE, KTCH…ACPE, and VYCC…ECKE. Positions 443-494 are disordered; sequence KVDAKPPAKKRKKKHPSKKERKGTIRDYECAETKQKKKHKKRKSGLQEIEGD. Over residues 449–463 the composition is skewed to basic residues; the sequence is PAKKRKKKHPSKKER. Residues 464-476 show a composition bias toward basic and acidic residues; it reads KGTIRDYECAETK. The span at 477-486 shows a compositional bias: basic residues; the sequence is QKKKHKKRKS.

As to quaternary structure, component of a nucleolar TRAMP-like complex, an ATP-dependent exosome regulatory complex consisting of a helicase (MTREX), an oligadenylate polymerase (PAPD5 or PAPD7), and a substrate specific RNA-binding factor (ZCCHC7 or ZCCHC8). Several TRAMP-like complexes exist with specific compositions and are associated with nuclear, or nucleolar RNA exosomes.

The protein localises to the nucleus. The protein resides in the nucleolus. The sequence is that of Zinc finger CCHC domain-containing protein 7 (zcchc7) from Xenopus laevis (African clawed frog).